The sequence spans 212 residues: Pyrrolidone-carboxylate peptidase (212 aa).

Residues glutamate 80, cysteine 143, and histidine 165 contribute to the active site.

It belongs to the peptidase C15 family. As to quaternary structure, homotetramer.

Its subcellular location is the cytoplasm. The enzyme catalyses Release of an N-terminal pyroglutamyl group from a polypeptide, the second amino acid generally not being Pro.. Functionally, removes 5-oxoproline from various penultimate amino acid residues except L-proline. This chain is Pyrrolidone-carboxylate peptidase, found in Vibrio campbellii (strain ATCC BAA-1116).